The chain runs to 166 residues: Ribosome maturation factor RimP (166 aa).

Belongs to the RimP family.

It localises to the cytoplasm. Required for maturation of 30S ribosomal subunits. The chain is Ribosome maturation factor RimP from Psychrobacter arcticus (strain DSM 17307 / VKM B-2377 / 273-4).